A 395-amino-acid chain; its full sequence is NAD(P)H-quinone oxidoreductase subunit H (395 aa).

It belongs to the complex I 49 kDa subunit family. NDH-1 can be composed of about 15 different subunits; different subcomplexes with different compositions have been identified which probably have different functions.

The protein resides in the cellular thylakoid membrane. The catalysed reaction is a plastoquinone + NADH + (n+1) H(+)(in) = a plastoquinol + NAD(+) + n H(+)(out). The enzyme catalyses a plastoquinone + NADPH + (n+1) H(+)(in) = a plastoquinol + NADP(+) + n H(+)(out). NDH-1 shuttles electrons from an unknown electron donor, via FMN and iron-sulfur (Fe-S) centers, to quinones in the respiratory and/or the photosynthetic chain. The immediate electron acceptor for the enzyme in this species is believed to be plastoquinone. Couples the redox reaction to proton translocation, and thus conserves the redox energy in a proton gradient. Cyanobacterial NDH-1 also plays a role in inorganic carbon-concentration. The protein is NAD(P)H-quinone oxidoreductase subunit H of Prochlorococcus marinus (strain MIT 9515).